The primary structure comprises 126 residues: Ribonuclease P protein component (126 aa).

The protein belongs to the RnpA family. Consists of a catalytic RNA component (M1 or rnpB) and a protein subunit.

The enzyme catalyses Endonucleolytic cleavage of RNA, removing 5'-extranucleotides from tRNA precursor.. Its function is as follows. RNaseP catalyzes the removal of the 5'-leader sequence from pre-tRNA to produce the mature 5'-terminus. It can also cleave other RNA substrates such as 4.5S RNA. The protein component plays an auxiliary but essential role in vivo by binding to the 5'-leader sequence and broadening the substrate specificity of the ribozyme. The sequence is that of Ribonuclease P protein component from Synechococcus sp. (strain JA-3-3Ab) (Cyanobacteria bacterium Yellowstone A-Prime).